Consider the following 486-residue polypeptide: Intermediate cleaving peptidase 55 (486 aa).

A mitochondrion-targeting transit peptide spans 1–19 (MSGYIRTLFIRNRFSNYRL). Residues Asp-317, Asp-328, His-407, Glu-434, and Glu-457 each contribute to the Mn(2+) site.

It belongs to the peptidase M24B family. Requires Mn(2+) as cofactor.

It is found in the mitochondrion inner membrane. It carries out the reaction The enzyme cleaves the 36-Pro-Pro-37 bond of cysteine desulfurase (EC 2.8.1.7) removing three amino acid residues (Tyr-Ser-Pro) from the N-terminus after cleavage by mitochondrial processing peptidase.. Functionally, aminopeptidase which cleaves preprotein intermediates that carry destabilizing N-ter amino acid residues after the mitochondrial processing peptidase (MPP) cleavage site and is thus critical for stabilization of the mitochondrial proteome. In Schizosaccharomyces pombe (strain 972 / ATCC 24843) (Fission yeast), this protein is Intermediate cleaving peptidase 55 (icp55).